A 159-amino-acid chain; its full sequence is Succinate dehydrogenase [ubiquinone] cytochrome b small subunit, mitochondrial (159 aa).

The N-terminal 56 residues, 1-56 (MAVLWRLSAVCGALGGRALLLRTPVVRPAHISAFLQDRPIPEWCGVQHIHLSPSHH), are a transit peptide targeting the mitochondrion. Residues 57-63 (SGSKAAS) are Mitochondrial matrix-facing. A helical transmembrane segment spans residues 64–85 (LHWTSERVVSVLLLGLLPAAYL). The Mitochondrial intermembrane portion of the chain corresponds to 86-90 (NPCSA). Residues 91–111 (MDYSLAAALTLHGHWGLGQVV) form a helical membrane-spanning segment. His-102 is a binding site for heme b. Over 112–122 (TDYVHGDALQK) the chain is Mitochondrial matrix. Residue Tyr-114 coordinates a ubiquinone. A helical transmembrane segment spans residues 123-144 (AAKAGLLALSALTFAGLCYFNY). Topologically, residues 145–159 (HDVGICKAVAMLWKL) are mitochondrial intermembrane.

Belongs to the CybS family. In terms of assembly, component of complex II composed of four subunits: the flavoprotein (FP) SDHA, iron-sulfur protein (IP) SDHB, and a cytochrome b560 composed of SDHC and SDHD.

Its subcellular location is the mitochondrion inner membrane. It functions in the pathway carbohydrate metabolism; tricarboxylic acid cycle. Membrane-anchoring subunit of succinate dehydrogenase (SDH) that is involved in complex II of the mitochondrial electron transport chain and is responsible for transferring electrons from succinate to ubiquinone (coenzyme Q). SDH also oxidizes malate to the non-canonical enol form of oxaloacetate, enol-oxaloacetate. Enol-oxaloacetate, which is a potent inhibitor of the succinate dehydrogenase activity, is further isomerized into keto-oxaloacetate. This Homo sapiens (Human) protein is Succinate dehydrogenase [ubiquinone] cytochrome b small subunit, mitochondrial (SDHD).